The primary structure comprises 180 residues: Cytochrome b6-f complex subunit 4 (180 aa).

3 helical membrane-spanning segments follow: residues 36–56 (LSYI…GLAV), 95–115 (LLGV…PFLE), and 131–151 (TVSL…ALPI).

It belongs to the cytochrome b family. PetD subfamily. As to quaternary structure, the 4 large subunits of the cytochrome b6-f complex are cytochrome b6, subunit IV (17 kDa polypeptide, petD), cytochrome f and the Rieske protein, while the 4 small subunits are petG, petL, petM and petN. The complex functions as a dimer.

It localises to the plastid. The protein resides in the chloroplast thylakoid membrane. Component of the cytochrome b6-f complex, which mediates electron transfer between photosystem II (PSII) and photosystem I (PSI), cyclic electron flow around PSI, and state transitions. This chain is Cytochrome b6-f complex subunit 4, found in Pinus thunbergii (Japanese black pine).